The sequence spans 252 residues: Imidazole glycerol phosphate synthase subunit HisF (252 aa).

Active-site residues include D11 and D130.

The protein belongs to the HisA/HisF family. As to quaternary structure, heterodimer of HisH and HisF.

It is found in the cytoplasm. It catalyses the reaction 5-[(5-phospho-1-deoxy-D-ribulos-1-ylimino)methylamino]-1-(5-phospho-beta-D-ribosyl)imidazole-4-carboxamide + L-glutamine = D-erythro-1-(imidazol-4-yl)glycerol 3-phosphate + 5-amino-1-(5-phospho-beta-D-ribosyl)imidazole-4-carboxamide + L-glutamate + H(+). Its pathway is amino-acid biosynthesis; L-histidine biosynthesis; L-histidine from 5-phospho-alpha-D-ribose 1-diphosphate: step 5/9. Its function is as follows. IGPS catalyzes the conversion of PRFAR and glutamine to IGP, AICAR and glutamate. The HisF subunit catalyzes the cyclization activity that produces IGP and AICAR from PRFAR using the ammonia provided by the HisH subunit. In Bacillus cereus (strain AH820), this protein is Imidazole glycerol phosphate synthase subunit HisF.